The chain runs to 943 residues: Leucine--tRNA ligase (943 aa).

A 'HIGH' region motif is present at residues 40 to 51 (PYPSGAGLHVGH). A 'KMSKS' region motif is present at residues 717–721 (KMSKS). Lys-720 serves as a coordination point for ATP.

This sequence belongs to the class-I aminoacyl-tRNA synthetase family.

Its subcellular location is the cytoplasm. The catalysed reaction is tRNA(Leu) + L-leucine + ATP = L-leucyl-tRNA(Leu) + AMP + diphosphate. The protein is Leucine--tRNA ligase of Bacteroides fragilis (strain ATCC 25285 / DSM 2151 / CCUG 4856 / JCM 11019 / LMG 10263 / NCTC 9343 / Onslow / VPI 2553 / EN-2).